The sequence spans 115 residues: NADH-ubiquinone oxidoreductase chain 3 (115 aa).

The next 3 helical transmembrane spans lie at 4-24 (LMILSVNIILSTCLIMIAFWL), 55-75 (FFLVAITFLLFDLEIALLLPL), and 84-104 (INMMMSTAFILVSILALGLAY).

This sequence belongs to the complex I subunit 3 family. In terms of assembly, core subunit of respiratory chain NADH dehydrogenase (Complex I) which is composed of 45 different subunits. Interacts with TMEM186. Interacts with TMEM242.

The protein localises to the mitochondrion inner membrane. The catalysed reaction is a ubiquinone + NADH + 5 H(+)(in) = a ubiquinol + NAD(+) + 4 H(+)(out). In terms of biological role, core subunit of the mitochondrial membrane respiratory chain NADH dehydrogenase (Complex I) which catalyzes electron transfer from NADH through the respiratory chain, using ubiquinone as an electron acceptor. Essential for the catalytic activity of complex I. This Podomys floridanus (Florida mouse) protein is NADH-ubiquinone oxidoreductase chain 3.